The primary structure comprises 357 residues: DNA primase small subunit PriS (357 aa).

Residues Asp-105, Asp-107, and Asp-259 contribute to the active site.

It belongs to the eukaryotic-type primase small subunit family. Heterodimer of a small subunit (PriS) and a large subunit (PriL). The cofactor is Mg(2+). Mn(2+) serves as cofactor.

Functionally, catalytic subunit of DNA primase, an RNA polymerase that catalyzes the synthesis of short RNA molecules used as primers for DNA polymerase during DNA replication. The small subunit contains the primase catalytic core and has DNA synthesis activity on its own. Binding to the large subunit stabilizes and modulates the activity, increasing the rate of DNA synthesis while decreasing the length of the DNA fragments, and conferring RNA synthesis capability. The DNA polymerase activity may enable DNA primase to also catalyze primer extension after primer synthesis. May also play a role in DNA repair. The protein is DNA primase small subunit PriS of Methanococcus maripaludis (strain DSM 14266 / JCM 13030 / NBRC 101832 / S2 / LL).